The primary structure comprises 30 residues: Cliotide T19 (30 aa).

A cross-link (cyclopeptide (Gly-Asn)) is located at residues 1 to 30 (GSVIKCGESCLLGKCYTPGCTCSRPICKKN). Intrachain disulfides connect Cys-6–Cys-20, Cys-10–Cys-22, and Cys-15–Cys-27.

In terms of processing, contains 3 disulfide bonds. Post-translationally, this is a cyclic peptide. In terms of tissue distribution, expressed in root nodules but not in seed.

Probably participates in a plant defense mechanism. Active against Gram-negative bacterium E.coli ATCC 700926 (MIC=0.6 uM) under low-salt conditions. Not active against Gram-positive bacterium S.aureus ATCC 12600 up to a concentration of 100 uM under low-salt conditions. Exhibits immunomodulatory activity but no cytotoxicity in vitro. This is Cliotide T19 from Clitoria ternatea (Butterfly pea).